Here is a 331-residue protein sequence, read N- to C-terminus: Nucleotide sugar transporter SLC35B4 (331 aa).

11 helical membrane passes run 4–24 (ALAV…LELL), 30–50 (GCGN…GFLF), 59–79 (PAIP…VSVV), 92–112 (LHMI…IIIL), 117–137 (SIFK…CTFM), 153–173 (GFQA…ALLM), 201–221 (ALPL…AVLF), 229–249 (IPVI…NIIT), 251–267 (YVCI…CASL), 268–288 (TVTL…ILYF), and 291–311 (PFTL…LMYT). The Mediates endoplasmic reticulum retention motif lies at 326–331 (KDSKKN).

This sequence belongs to the nucleotide-sugar transporter family. SLC35B subfamily.

Its subcellular location is the endoplasmic reticulum membrane. It carries out the reaction UDP-N-acetyl-alpha-D-glucosamine(in) + UDP-alpha-D-glucuronate(out) = UDP-N-acetyl-alpha-D-glucosamine(out) + UDP-alpha-D-glucuronate(in). It catalyses the reaction UDP-alpha-D-xylose(in) + UDP-alpha-D-glucuronate(out) = UDP-alpha-D-xylose(out) + UDP-alpha-D-glucuronate(in). Functionally, antiporter that transports nucleotide sugars across the endoplasmic reticulum (ER) membrane in exchange for another nucleotide sugar. May couple UDP-alpha-D-glucuronate (UDP-GlcA) or UDP-alpha-D-xylose (UDP-Xyl) efflux to UDP-alpha-D-glucuronate (UDP-GlcA) influx into the ER lumen, which in turn stimulates glucuronidation and excretion of endobiotics and xenobiotics. In terms of biological role, has UDP-GlcA:UDP-GlcNAc antiporter activity. The polypeptide is Nucleotide sugar transporter SLC35B4 (SLC35B4) (Homo sapiens (Human)).